The chain runs to 307 residues: Elongation factor Ts (307 aa).

The involved in Mg(2+) ion dislocation from EF-Tu stretch occupies residues 82 to 85; sequence TDFV.

It belongs to the EF-Ts family.

Its subcellular location is the cytoplasm. In terms of biological role, associates with the EF-Tu.GDP complex and induces the exchange of GDP to GTP. It remains bound to the aminoacyl-tRNA.EF-Tu.GTP complex up to the GTP hydrolysis stage on the ribosome. The sequence is that of Elongation factor Ts from Nautilia profundicola (strain ATCC BAA-1463 / DSM 18972 / AmH).